We begin with the raw amino-acid sequence, 270 residues long: Fibroblast growth factor 5 (270 aa).

The first 20 residues, 1-20, serve as a signal peptide directing secretion; that stretch reads MSLSFLLLLFLSHLILSAWA. A disordered region spans residues 26–83; that stretch reads LAPKGQPGPAATGRNPAGASSSRSSRGTTSSSSSSVSSSHSASLGNQGSGLEQSSFQW. Residues 43 to 68 are compositionally biased toward low complexity; that stretch reads GASSSRSSRGTTSSSSSSVSSSHSAS. Over residues 69–83 the composition is skewed to polar residues; sequence LGNQGSGLEQSSFQW. Asn-112 carries an N-linked (GlcNAc...) asparagine glycan. The interval 236–257 is disordered; that stretch reads PEKKKPPSPVKPKVPLSAPRKS.

Belongs to the heparin-binding growth factors family. Interacts with FGFR1 and FGFR2. Affinity between fibroblast growth factors (FGFs) and their receptors is increased by heparan sulfate glycosaminoglycans that function as coreceptors. In terms of tissue distribution, expressed in skin.

It localises to the secreted. In terms of biological role, plays an important role in the regulation of cell proliferation and cell differentiation. Required for normal regulation of the hair growth cycle. Functions as an inhibitor of hair elongation by promoting progression from anagen, the growth phase of the hair follicle, into catagen the apoptosis-induced regression phase. The chain is Fibroblast growth factor 5 (FGF5) from Felis catus (Cat).